Consider the following 507-residue polypeptide: Phytoene dehydrogenase (507 aa).

12–45 lines the FAD pocket; that stretch reads VVVGAGLAGLAAALHLLGAGRRVTVVEREDVPGG.

Belongs to the carotenoid/retinoid oxidoreductase family. It depends on FAD as a cofactor.

It functions in the pathway carotenoid biosynthesis; lycopene biosynthesis. Functionally, this enzyme converts phytoene into zeta-carotene via the intermediary of phytofluene by the symmetrical introduction of two double bonds at the C-11 and C-11' positions of phytoene. This Streptomyces griseus protein is Phytoene dehydrogenase (crtI).